Here is a 380-residue protein sequence, read N- to C-terminus: 4-hydroxy-3-methylbut-2-en-1-yl diphosphate synthase (flavodoxin) (380 aa).

Cysteine 273, cysteine 276, cysteine 308, and glutamate 315 together coordinate [4Fe-4S] cluster.

The protein belongs to the IspG family. [4Fe-4S] cluster serves as cofactor.

It catalyses the reaction (2E)-4-hydroxy-3-methylbut-2-enyl diphosphate + oxidized [flavodoxin] + H2O + 2 H(+) = 2-C-methyl-D-erythritol 2,4-cyclic diphosphate + reduced [flavodoxin]. It functions in the pathway isoprenoid biosynthesis; isopentenyl diphosphate biosynthesis via DXP pathway; isopentenyl diphosphate from 1-deoxy-D-xylulose 5-phosphate: step 5/6. Converts 2C-methyl-D-erythritol 2,4-cyclodiphosphate (ME-2,4cPP) into 1-hydroxy-2-methyl-2-(E)-butenyl 4-diphosphate. The chain is 4-hydroxy-3-methylbut-2-en-1-yl diphosphate synthase (flavodoxin) from Leifsonia xyli subsp. xyli (strain CTCB07).